The primary structure comprises 439 residues: Forkhead box protein J1-B (439 aa).

The fork-head DNA-binding region spans 124–218 (KPPYSYATLI…MNGAMKKRRL (95 aa)).

Belongs to the FOXJ1 family.

It is found in the nucleus. Functionally, key transcription factor required for motile ciliogenesis. Activates genes essential for motile cilia formation and function. The polypeptide is Forkhead box protein J1-B (foxj1-b) (Xenopus laevis (African clawed frog)).